The chain runs to 615 residues: Cysteine-rich receptor-like protein kinase 1 (615 aa).

Positions 1–28 (MQICASIAQFLAWVSFLVLLATVGSSSS) are cleaved as a signal peptide. 2 Gnk2-homologous domains span residues 29–131 (SESL…DRDF) and 137–237 (DPTF…THKF). The Extracellular portion of the chain corresponds to 29–266 (SESLLNCQPL…SFFPHLSDRD (238 aa)). Residues Asn-100 and Asn-165 are each glycosylated (N-linked (GlcNAc...) asparagine). Residues 267-287 (VTRLAIAAISLSILTSLGAFI) traverse the membrane as a helical segment. Residues 288 to 615 (SYRRVSRKRK…VLMPDEETRV (328 aa)) lie on the Cytoplasmic side of the membrane. The Protein kinase domain occupies 318–602 (FHDSMKLGQG…FEYPKQPPFL (285 aa)). ATP-binding positions include 324 to 332 (LGQGGAGSV) and Lys-346. The active-site Proton acceptor is Asp-443.

This sequence belongs to the protein kinase superfamily. Ser/Thr protein kinase family. CRK subfamily. In terms of tissue distribution, expressed in the whole plant at low levels.

It is found in the membrane. It carries out the reaction L-seryl-[protein] + ATP = O-phospho-L-seryl-[protein] + ADP + H(+). The catalysed reaction is L-threonyl-[protein] + ATP = O-phospho-L-threonyl-[protein] + ADP + H(+). The chain is Cysteine-rich receptor-like protein kinase 1 from Arabidopsis thaliana (Mouse-ear cress).